Consider the following 349-residue polypeptide: Phosphate acyltransferase (349 aa).

This sequence belongs to the PlsX family. In terms of assembly, homodimer. Probably interacts with PlsY.

The protein resides in the cytoplasm. The catalysed reaction is a fatty acyl-[ACP] + phosphate = an acyl phosphate + holo-[ACP]. The protein operates within lipid metabolism; phospholipid metabolism. Catalyzes the reversible formation of acyl-phosphate (acyl-PO(4)) from acyl-[acyl-carrier-protein] (acyl-ACP). This enzyme utilizes acyl-ACP as fatty acyl donor, but not acyl-CoA. This chain is Phosphate acyltransferase, found in Albidiferax ferrireducens (strain ATCC BAA-621 / DSM 15236 / T118) (Rhodoferax ferrireducens).